Reading from the N-terminus, the 293-residue chain is tRNA pseudouridine synthase B (293 aa).

Asp-38 (nucleophile) is an active-site residue.

Belongs to the pseudouridine synthase TruB family. Type 1 subfamily.

The catalysed reaction is uridine(55) in tRNA = pseudouridine(55) in tRNA. In terms of biological role, responsible for synthesis of pseudouridine from uracil-55 in the psi GC loop of transfer RNAs. This Trichormus variabilis (strain ATCC 29413 / PCC 7937) (Anabaena variabilis) protein is tRNA pseudouridine synthase B.